Consider the following 82-residue polypeptide: Small ribosomal subunit protein uS17 (82 aa).

The protein belongs to the universal ribosomal protein uS17 family. Part of the 30S ribosomal subunit.

Functionally, one of the primary rRNA binding proteins, it binds specifically to the 5'-end of 16S ribosomal RNA. In Rhodopseudomonas palustris (strain HaA2), this protein is Small ribosomal subunit protein uS17.